Consider the following 353-residue polypeptide: O-antigen biosynthesis glycosyltransferase WclY (353 aa).

The chain crosses the membrane as a helical span at residues 116-136 (SLIWGLLWCSIWLFFDKLVIL). UDP contacts are provided by N190 and E271. Residues 263–271 (EGFGLTVLE) carry the E(x7)E glycosyltransferase motif motif.

The protein belongs to the glycosyltransferase group 1 family. Glycosyltransferase 4 subfamily.

The protein localises to the membrane. The protein operates within bacterial outer membrane biogenesis; LPS O-antigen biosynthesis. Involved in the assembly of the O-repeating unit during O-antigen biosynthesis. N-acetylglucosamine transferase accountable for the alpha-D-GlcNAc-1,4-beta-D-Gal linkage within the O-antigen. The chain is O-antigen biosynthesis glycosyltransferase WclY from Escherichia coli.